Consider the following 313-residue polypeptide: Platelet glycoprotein VI (313 aa).

Residues 1–21 (MSPASPTFFCIGLCVLQVIQT) form the signal peptide. Over 22-265 (QSGPLPKPSL…FGFAHQHYAK (244 aa)) the chain is Extracellular. Ig-like C2-type domains follow at residues 27-105 (PKPS…DQLE) and 115-197 (PSLS…APSD). Cys49 and Cys89 are oxidised to a cystine. Residue Asn93 is glycosylated (N-linked (GlcNAc...) asparagine). Cys135 and Cys181 are joined by a disulfide. A disordered region spans residues 213 to 236 (VPTEESFPVTESSRRPSILPTNKI). Asn244 carries N-linked (GlcNAc...) asparagine glycosylation. Residues 266 to 286 (GNLVRICLGATIIIILLGLLA) traverse the membrane as a helical segment. The Cytoplasmic portion of the chain corresponds to 287 to 313 (EDWHSRKKCLQHRMRALQRPLPPLPLA).

Associated with Fc receptor gamma chain. The GPVI:FcRgamma complex is associated with the Src kinase family FYN and LYN. Interacts with TRAF4. Interacts with COL1A1, but not with COL4A4. As to expression, megakaryocytes and platelets.

It is found in the cell membrane. Functionally, collagen receptor involved in collagen-induced platelet adhesion and activation. Plays a key role in platelet procoagulant activity and subsequent thrombin and fibrin formation. This procoagulant function may contribute to arterial and venous thrombus formation. The signaling pathway involves the FcR gamma-chain, the Src kinases (likely FYN or LYN) and SYK, the adapter protein LAT and leads to the activation of PLCG2. This is Platelet glycoprotein VI from Mus musculus (Mouse).